The following is a 208-amino-acid chain: FMN-dependent NADH:quinone oxidoreductase 4 (208 aa).

This sequence belongs to the azoreductase type 1 family. As to quaternary structure, homodimer. Requires FMN as cofactor.

It carries out the reaction 2 a quinone + NADH + H(+) = 2 a 1,4-benzosemiquinone + NAD(+). The enzyme catalyses N,N-dimethyl-1,4-phenylenediamine + anthranilate + 2 NAD(+) = 2-(4-dimethylaminophenyl)diazenylbenzoate + 2 NADH + 2 H(+). Its function is as follows. Quinone reductase that provides resistance to thiol-specific stress caused by electrophilic quinones. Also exhibits azoreductase activity. Catalyzes the reductive cleavage of the azo bond in aromatic azo compounds to the corresponding amines. The protein is FMN-dependent NADH:quinone oxidoreductase 4 of Bacillus anthracis.